Here is a 195-residue protein sequence, read N- to C-terminus: Myelin-associated neurite-outgrowth inhibitor (195 aa).

Methionine 1 is subject to N-acetylmethionine. The Cytoplasmic segment spans residues 1 to 18 (MNPVYSPGSSGVPYANAK). Serine 6 bears the Phosphoserine mark. A helical membrane pass occupies residues 19-42 (GIGYPAGFPMGYAAAAPAYSPNMY). Over 43 to 142 (PGANPTFQAG…PAPLPPPRGN (100 aa)) the chain is Extracellular. N-linked (GlcNAc...) asparagine glycosylation occurs at asparagine 46. The chain crosses the membrane as a helical span at residues 143-164 (GVTMGMVAGTTMAMSAGTLLTA). Topologically, residues 165-195 (HSPTPVAPHPVTVPTYRAPGTPTYSYVPPQW) are cytoplasmic.

It belongs to the FAM168 family. May form homodimers. May interact with DAZAP2, FAM168A, PRDX6, RBM6, TMTC1 and YPEL2. Interacts with CDC27. In terms of processing, N-glycosylated.

Its subcellular location is the cytoplasm. The protein resides in the perinuclear region. It is found in the cell membrane. It localises to the cell projection. The protein localises to the axon. Inhibitor of neuronal axonal outgrowth. Acts as a negative regulator of CDC42 and STAT3 and a positive regulator of STMN2. Positive regulator of CDC27. The polypeptide is Myelin-associated neurite-outgrowth inhibitor (FAM168B) (Bos taurus (Bovine)).